Consider the following 762-residue polypeptide: MEGPRSSTHVPLVLPLLVLLLLAPARQAAAQRCPQACICDNSRRHVACRYQNLTEVPDAIPELTQRLDLQGNLLKVIPAAAFQGVPHLTHLDLRHCEVELVAEGAFRGLGRLLLLNLASNHLRELPQEALDGLGSLRRLELEGNALEELRPGTFGALGALATLNLAHNALVYLPAMAFQGLLRVRWLRLSHNALSVLAPEALAGLPALRRLSLHHNELQALPGPVLSQARGLARLELGHNPLTYAGEEDGLALPGLRELLLDGGALQALGPRAFAHCPRLHTLDLRGNQLDTLPPLQGPGQLRRLRLQGNPLWCGCQARPLLEWLARARVRSDGACQGPRRLRGEALDALRPWDLRCPGDAAQEEEELEERAVAGPRAPPRGPPRGPGEERAVAPCPRACVCVPESRHSSCEGCGLQAVPRGFPSDTQLLDLRRNHFPSVPRAAFPGLGHLVSLHLQHCGIAELEAGALAGLGRLIYLYLSDNQLAGLSAAALEGAPRLGYLYLERNRFLQVPGAALRALPSLFSLHLQDNAVDRLAPGDLGRTRALRWVYLSGNRITEVSLGALGPARELEKLHLDRNQLREVPTGALEGLPALLELQLSGNPLRALRDGAFQPVGRSLQHLFLNSSGLEQICPGAFSGLGPGLQSLHLQKNQLRALPALPSLSQLELIDLSSNPFHCDCQLLPLHRWLTGLNLRVGATCATPPNARGQRVKAAAAVFEDCPGWAARKAKRTPASRPSARRTPIKGRQCGADKVGKEKGRL.

An N-terminal signal peptide occupies residues 1–30; sequence MEGPRSSTHVPLVLPLLVLLLLAPARQAAA. The LRRNT 1 domain maps to 31–62; the sequence is QRCPQACICDNSRRHVACRYQNLTEVPDAIPE. An N-linked (GlcNAc...) asparagine glycan is attached at N52. 9 LRR repeats span residues 87-108, 111-132, 135-156, 159-180, 183-204, 207-228, 231-252, 255-276, and 279-300; these read HLTH…AFRG, RLLL…ALDG, SLRR…TFGA, ALAT…AFQG, RVRW…ALAG, ALRR…VLSQ, GLAR…DGLA, GLRE…AFAH, and RLHT…QGPG. The 50-residue stretch at 310-359 folds into the LRRCT 1 domain; that stretch reads NPLWCGCQARPLLEWLARARVRSDGACQGPRRLRGEALDALRPWDLRCPG. Residues 364–390 are disordered; sequence EEEELEERAVAGPRAPPRGPPRGPGEE. A compositionally biased stretch (pro residues) spans 377–386; sequence RAPPRGPPRG. Residues 387–425 form the LRRNT 2 domain; that stretch reads PGEERAVAPCPRACVCVPESRHSSCEGCGLQAVPRGFPS. C396 and C411 are joined by a disulfide. 10 LRR repeats span residues 426–447, 450–471, 474–495, 498–519, 522–543, 546–566, 570–591, 594–615, 619–640, and 644–665; these read DTQL…AFPG, HLVS…ALAG, RLIY…ALEG, RLGY…ALRA, SLFS…DLGR, ALRW…GALG, ELEK…ALEG, ALLE…AFQP, SLQH…AFSG, and GLQS…PSLS. The N-linked (GlcNAc...) asparagine glycan is linked to N626. Residues 675–724 enclose the LRRCT 2 domain; sequence NPFHCDCQLLPLHRWLTGLNLRVGATCATPPNARGQRVKAAAAVFEDCPG. Intrachain disulfides connect C679–C722 and C681–C701. A compositionally biased stretch (basic residues) spans 728–745; sequence RKAKRTPASRPSARRTPI. Residues 728–762 are disordered; sequence RKAKRTPASRPSARRTPIKGRQCGADKVGKEKGRL.

It belongs to the small leucine-rich proteoglycan (SLRP) family. SLRP class IV subfamily. As to quaternary structure, associates with collagen and binds to collagen fibrils.

It localises to the secreted. It is found in the extracellular space. The protein localises to the extracellular matrix. In terms of biological role, potential negative modulator of chondrocyte differentiation. Inhibits collagen fibrillogenesis in vitro. May influence chondrocyte's differentiation by acting on its cellular collagenous microenvironment. This Homo sapiens (Human) protein is Chondroadherin-like protein (CHADL).